We begin with the raw amino-acid sequence, 271 residues long: Type II restriction enzyme ScrFI (271 aa).

It carries out the reaction Endonucleolytic cleavage of DNA to give specific double-stranded fragments with terminal 5'-phosphates.. Its function is as follows. A P subtype restriction enzyme that recognizes the double-stranded sequence 5'-CCNGG-3' and cleaves after C-2. The protein is Type II restriction enzyme ScrFI of Lactococcus lactis subsp. cremoris (Streptococcus cremoris).